The primary structure comprises 493 residues: Glutamyl-tRNA(Gln) amidotransferase subunit A (493 aa).

Residues K81 and S156 each act as charge relay system in the active site. The active-site Acyl-ester intermediate is the S180.

Belongs to the amidase family. GatA subfamily. Heterotrimer of A, B and C subunits.

The catalysed reaction is L-glutamyl-tRNA(Gln) + L-glutamine + ATP + H2O = L-glutaminyl-tRNA(Gln) + L-glutamate + ADP + phosphate + H(+). Functionally, allows the formation of correctly charged Gln-tRNA(Gln) through the transamidation of misacylated Glu-tRNA(Gln) in organisms which lack glutaminyl-tRNA synthetase. The reaction takes place in the presence of glutamine and ATP through an activated gamma-phospho-Glu-tRNA(Gln). The polypeptide is Glutamyl-tRNA(Gln) amidotransferase subunit A (Mycolicibacterium paratuberculosis (strain ATCC BAA-968 / K-10) (Mycobacterium paratuberculosis)).